The primary structure comprises 332 residues: Ferredoxin--NADP reductase 1 (332 aa).

FAD-binding residues include Asp-35, Lys-43, Phe-48, Val-88, Phe-123, Asp-284, and Thr-325.

It belongs to the ferredoxin--NADP reductase type 2 family. As to quaternary structure, homodimer. FAD serves as cofactor.

It catalyses the reaction 2 reduced [2Fe-2S]-[ferredoxin] + NADP(+) + H(+) = 2 oxidized [2Fe-2S]-[ferredoxin] + NADPH. The sequence is that of Ferredoxin--NADP reductase 1 from Listeria welshimeri serovar 6b (strain ATCC 35897 / DSM 20650 / CCUG 15529 / CIP 8149 / NCTC 11857 / SLCC 5334 / V8).